The primary structure comprises 186 residues: Mitochondrial import inner membrane translocase subunit Tim22 (186 aa).

Disulfide bonds link Cys-61/Cys-133 and Cys-152/Cys-171. 3 helical membrane passes run 66-86 (ALAC…TAGI), 117-135 (YAKN…ECLV), and 162-182 (AGLK…AVID).

It belongs to the Tim17/Tim22/Tim23 family. In terms of assembly, core component of the TIM22 complex.

The protein localises to the mitochondrion inner membrane. In terms of biological role, essential core component of the TIM22 complex, a complex that mediates the import and insertion of multi-pass transmembrane proteins into the mitochondrial inner membrane. In the TIM22 complex, it constitutes the voltage-activated and signal-gated channel. Forms a twin-pore translocase that uses the membrane potential as external driving force in 2 voltage-dependent steps. This is Mitochondrial import inner membrane translocase subunit Tim22 (timm22) from Xenopus tropicalis (Western clawed frog).